A 303-amino-acid polypeptide reads, in one-letter code: Uricase (303 aa).

Alanine 2 carries the post-translational modification N-acetylalanine. 2 positions are modified to N6-acetyllysine; alternate: lysine 10 and lysine 23. N6-succinyllysine; alternate occurs at positions 10 and 23. Lysine 23 serves as the catalytic Charge relay system. Lysine 27 and lysine 36 each carry N6-acetyllysine. Residues serine 39 and serine 63 each carry the phosphoserine modification. Catalysis depends on threonine 68, which acts as the Charge relay system. 2 residues coordinate urate: threonine 68 and aspartate 69. N6-acetyllysine is present on residues lysine 118, lysine 122, and lysine 164. Phenylalanine 170 is a binding site for urate. Residues lysine 175 and lysine 185 each carry the N6-acetyllysine modification. Arginine 187 contacts urate. N6-acetyllysine; alternate occurs at positions 220 and 227. Lysine 220 and lysine 227 each carry N6-succinyllysine; alternate. Serine 231 carries the post-translational modification Phosphoserine. Urate-binding residues include valine 234, glutamine 235, and asparagine 261. Catalysis depends on histidine 263, which acts as the Charge relay system. An N6-acetyllysine modification is found at lysine 277. Position 288 is a phosphotyrosine (tyrosine 288). Positions 301–303 (SRL) match the Microbody targeting signal motif.

It belongs to the uricase family. Post-translationally, acetylation of Lys-118, Lys-164 and Lys-290 is observed in liver mitochondria from fasted mice but not from fed mice. May be deacetylated by Sirt5; however it is unclear whether Sirt5 mediates deacetylation or desuccinylation of Uox; additional evidence is required to validate these results.

It localises to the peroxisome. It is found in the mitochondrion. It carries out the reaction urate + O2 + H2O = 5-hydroxyisourate + H2O2. It participates in purine metabolism; urate degradation; (S)-allantoin from urate: step 1/3. Functionally, catalyzes the oxidation of uric acid to 5-hydroxyisourate, which is further processed to form (S)-allantoin. The polypeptide is Uricase (Uox) (Mus musculus (Mouse)).